We begin with the raw amino-acid sequence, 232 residues long: 5'-methylthioadenosine/S-adenosylhomocysteine nucleosidase (232 aa).

The Proton acceptor role is filled by glutamate 12. Substrate contacts are provided by residues glycine 78, isoleucine 152, and 173–174; that span reads ME. Catalysis depends on aspartate 197, which acts as the Proton donor.

This sequence belongs to the PNP/UDP phosphorylase family. MtnN subfamily. As to quaternary structure, homodimer.

It carries out the reaction S-adenosyl-L-homocysteine + H2O = S-(5-deoxy-D-ribos-5-yl)-L-homocysteine + adenine. The enzyme catalyses S-methyl-5'-thioadenosine + H2O = 5-(methylsulfanyl)-D-ribose + adenine. It catalyses the reaction 5'-deoxyadenosine + H2O = 5-deoxy-D-ribose + adenine. It participates in amino-acid biosynthesis; L-methionine biosynthesis via salvage pathway; S-methyl-5-thio-alpha-D-ribose 1-phosphate from S-methyl-5'-thioadenosine (hydrolase route): step 1/2. Functionally, catalyzes the irreversible cleavage of the glycosidic bond in both 5'-methylthioadenosine (MTA) and S-adenosylhomocysteine (SAH/AdoHcy) to adenine and the corresponding thioribose, 5'-methylthioribose and S-ribosylhomocysteine, respectively. Also cleaves 5'-deoxyadenosine, a toxic by-product of radical S-adenosylmethionine (SAM) enzymes, into 5-deoxyribose and adenine. Thus, is required for in vivo function of the radical SAM enzymes biotin synthase and lipoic acid synthase, that are inhibited by 5'-deoxyadenosine accumulation. The chain is 5'-methylthioadenosine/S-adenosylhomocysteine nucleosidase from Pectobacterium carotovorum subsp. carotovorum (strain PC1).